The primary structure comprises 243 residues: Triosephosphate isomerase (243 aa).

9–11 is a substrate binding site; that stretch reads NWK. Residue His96 is the Electrophile of the active site. Glu165 acts as the Proton acceptor in catalysis. Residues Gly171, Ser204, and 225–226 each bind substrate; that span reads GG.

It belongs to the triosephosphate isomerase family. In terms of assembly, homodimer.

The protein localises to the cytoplasm. It carries out the reaction D-glyceraldehyde 3-phosphate = dihydroxyacetone phosphate. It participates in carbohydrate biosynthesis; gluconeogenesis. It functions in the pathway carbohydrate degradation; glycolysis; D-glyceraldehyde 3-phosphate from glycerone phosphate: step 1/1. Its function is as follows. Involved in the gluconeogenesis. Catalyzes stereospecifically the conversion of dihydroxyacetone phosphate (DHAP) to D-glyceraldehyde-3-phosphate (G3P). The chain is Triosephosphate isomerase from Synechococcus sp. (strain WH7803).